A 576-amino-acid chain; its full sequence is High-affinity choline transporter 1 (576 aa).

The helical transmembrane segment at 6-26 threads the bilayer; that stretch reads GIVAIVFFYVLILVVGIWAGR. At 27–51 the chain is on the cytoplasmic side; the sequence is KSKSSKELESEAGAATEEVMLAGRN. Residues 52–72 traverse the membrane as a helical segment; that stretch reads IGTLVGIFTMTATWVGGAYIN. Over 73 to 82 the chain is Extracellular; the sequence is GTAEALYNGG. Residues 83–103 traverse the membrane as a helical segment; it reads LLGCQAPVGYAISLVMGGLLF. Residues 104–126 lie on the Cytoplasmic side of the membrane; it reads AKKMREEGYITMLDPFQHKYGQR. A helical transmembrane segment spans residues 127-147; it reads IGGLMYVPALLGETFWTAAIL. Residues 148–165 lie on the Extracellular side of the membrane; sequence SALGATLSVILGIDMNAS. Residues 166 to 186 form a helical membrane-spanning segment; it reads VTLSACIAVFYTFTGGYYAVA. The Cytoplasmic segment spans residues 187-192; sequence YTDVVQ. The chain crosses the membrane as a helical span at residues 193–213; sequence LFCIFVGLWVCVPAAMVHDGA. The Extracellular segment spans residues 214–233; it reads KDISRNAGDWIGEIGGFKET. A helical membrane pass occupies residues 234 to 254; the sequence is SLWIDCMLLLVFGGIPWQVYF. Residues 255–270 lie on the Cytoplasmic side of the membrane; that stretch reads QRVLSSKTAHGAQTLS. A helical membrane pass occupies residues 271 to 291; it reads FVAGVGCILMAIPPALIGAIA. At 292-319 the chain is on the extracellular side; it reads RNTDWRMTDYSPWNNGTKVESIPPDKRN. An N-linked (GlcNAc...) asparagine glycan is attached at Asn306. The chain crosses the membrane as a helical span at residues 320–340; it reads MVVPLVFQYLTPRWVAFIGLG. At 341–378 the chain is on the cytoplasmic side; that stretch reads AVSAAVMSSADSSVLSAASMFAHNIWKLTIRPHASEKE. Residues 379 to 399 form a helical membrane-spanning segment; it reads VIIVMRIAIICVGIMATIMAL. Residues 400-408 lie on the Extracellular side of the membrane; the sequence is TIQSIYGLW. A helical membrane pass occupies residues 409–429; that stretch reads YLCADLVYVILFPQLLCVVYM. Over 430–437 the chain is Cytoplasmic; that stretch reads PRSNTYGS. Residues 438 to 458 form a helical membrane-spanning segment; it reads LAGYAVGLVLRLIGGEPLVSL. Topologically, residues 459–478 are extracellular; sequence PAFFHYPMYTDGVQYFPFRT. A helical transmembrane segment spans residues 479–499; it reads TAMLSSMATIYIVSIQSEKLF. Residues 500 to 576 are Cytoplasmic-facing; sequence KSGRLSPEWD…DQSYYSTNSN (77 aa). A disordered region spans residues 541 to 576; sequence APNGTPAPVHPNQQPSDENTLLHPYSDQSYYSTNSN. Residues 566–576 are compositionally biased toward polar residues; the sequence is SDQSYYSTNSN.

This sequence belongs to the sodium:solute symporter (SSF) (TC 2.A.21) family. Detected in the nervous system, including the nerve ring and cholinergic motor neurons of the ventral nerve cord.

It is found in the membrane. Functionally, imports choline from the extracellular space to the neuron with high affinity. Choline uptake is the rate-limiting step in acetylcholine synthesis. Sodium ion and chloride ion dependent. The sequence is that of High-affinity choline transporter 1 (cho-1) from Caenorhabditis elegans.